A 527-amino-acid chain; its full sequence is Cytokinin dehydrogenase 6 (527 aa).

Positions 1-22 (MAARCSIAFMVMASCLSVVVSG) are cleaved as a signal peptide. In terms of domain architecture, FAD-binding PCMH-type spans 55-236 (VAAAPEAVLH…TRARIGLEPA (182 aa)). FAD contacts are provided by G91 and G93. H94 is subject to Pros-8alpha-FAD histidine. 2 residues coordinate FAD: S95 and Q99. A glycan (N-linked (GlcNAc...) asparagine) is linked at N121. Positions 160, 165, 171, 175, and 226 each coordinate FAD. Residues N280 and N323 are each glycosylated (N-linked (GlcNAc...) asparagine). Residues Y475, S510, and Q513 each coordinate FAD.

Belongs to the oxygen-dependent FAD-linked oxidoreductase family. Monomer. FAD is required as a cofactor.

Its subcellular location is the secreted. The protein localises to the extracellular space. It catalyses the reaction N(6)-dimethylallyladenine + A + H2O = 3-methyl-2-butenal + adenine + AH2. Functionally, catalyzes the oxidation of cytokinins, a family of N(6)-substituted adenine derivatives that are plant hormones, where the substituent is an isopentenyl group. The protein is Cytokinin dehydrogenase 6 (CKX6) of Oryza sativa subsp. japonica (Rice).